Here is a 171-residue protein sequence, read N- to C-terminus: Adenine phosphoribosyltransferase (171 aa).

This sequence belongs to the purine/pyrimidine phosphoribosyltransferase family. In terms of assembly, homodimer.

The protein resides in the cytoplasm. It carries out the reaction AMP + diphosphate = 5-phospho-alpha-D-ribose 1-diphosphate + adenine. The protein operates within purine metabolism; AMP biosynthesis via salvage pathway; AMP from adenine: step 1/1. Its function is as follows. Catalyzes a salvage reaction resulting in the formation of AMP, that is energically less costly than de novo synthesis. The polypeptide is Adenine phosphoribosyltransferase (Shouchella clausii (strain KSM-K16) (Alkalihalobacillus clausii)).